The following is a 336-amino-acid chain: 4-hydroxy-3-methylbut-2-enyl diphosphate reductase (336 aa).

Cys37 contacts [4Fe-4S] cluster. The (2E)-4-hydroxy-3-methylbut-2-enyl diphosphate site is built by His66 and His99. Dimethylallyl diphosphate-binding residues include His66 and His99. Residues His66 and His99 each contribute to the isopentenyl diphosphate site. Position 121 (Cys121) interacts with [4Fe-4S] cluster. His149 is a binding site for (2E)-4-hydroxy-3-methylbut-2-enyl diphosphate. His149 is a binding site for dimethylallyl diphosphate. Residue His149 coordinates isopentenyl diphosphate. Glu151 (proton donor) is an active-site residue. (2E)-4-hydroxy-3-methylbut-2-enyl diphosphate is bound at residue Thr189. [4Fe-4S] cluster is bound at residue Cys219. Ser247, Ser248, Asn249, and Ser292 together coordinate (2E)-4-hydroxy-3-methylbut-2-enyl diphosphate. Dimethylallyl diphosphate-binding residues include Ser247, Ser248, Asn249, and Ser292. Residues Ser247, Ser248, Asn249, and Ser292 each coordinate isopentenyl diphosphate.

This sequence belongs to the IspH family. The cofactor is [4Fe-4S] cluster.

It catalyses the reaction isopentenyl diphosphate + 2 oxidized [2Fe-2S]-[ferredoxin] + H2O = (2E)-4-hydroxy-3-methylbut-2-enyl diphosphate + 2 reduced [2Fe-2S]-[ferredoxin] + 2 H(+). The enzyme catalyses dimethylallyl diphosphate + 2 oxidized [2Fe-2S]-[ferredoxin] + H2O = (2E)-4-hydroxy-3-methylbut-2-enyl diphosphate + 2 reduced [2Fe-2S]-[ferredoxin] + 2 H(+). The protein operates within isoprenoid biosynthesis; dimethylallyl diphosphate biosynthesis; dimethylallyl diphosphate from (2E)-4-hydroxy-3-methylbutenyl diphosphate: step 1/1. It participates in isoprenoid biosynthesis; isopentenyl diphosphate biosynthesis via DXP pathway; isopentenyl diphosphate from 1-deoxy-D-xylulose 5-phosphate: step 6/6. Functionally, catalyzes the conversion of 1-hydroxy-2-methyl-2-(E)-butenyl 4-diphosphate (HMBPP) into a mixture of isopentenyl diphosphate (IPP) and dimethylallyl diphosphate (DMAPP). Acts in the terminal step of the DOXP/MEP pathway for isoprenoid precursor biosynthesis. The chain is 4-hydroxy-3-methylbut-2-enyl diphosphate reductase from Nocardia farcinica (strain IFM 10152).